Reading from the N-terminus, the 438-residue chain is Trigger factor (438 aa).

Residues 160–245 (DDKVTIDFVG…VKKIQQAELP (86 aa)) form the PPIase FKBP-type domain.

The protein belongs to the FKBP-type PPIase family. Tig subfamily.

It localises to the cytoplasm. It carries out the reaction [protein]-peptidylproline (omega=180) = [protein]-peptidylproline (omega=0). In terms of biological role, involved in protein export. Acts as a chaperone by maintaining the newly synthesized protein in an open conformation. Functions as a peptidyl-prolyl cis-trans isomerase. The protein is Trigger factor of Francisella tularensis subsp. holarctica (strain OSU18).